We begin with the raw amino-acid sequence, 199 residues long: uncharacterized protein (199 aa).

Transmembrane regions (helical) follow at residues 22–44, 65–87, and 91–108; these read VVVV…YLFL, TGFI…HLAL, and HTIT…FFFW.

The protein belongs to the ycf1 family.

It is found in the mitochondrion membrane. This is an uncharacterized protein from Arabidopsis thaliana (Mouse-ear cress).